The chain runs to 766 residues: Phosphoribosylformylglycinamidine synthase subunit PurL (766 aa).

His-66 is a catalytic residue. 2 residues coordinate ATP: Tyr-69 and Lys-113. Glu-115 serves as a coordination point for Mg(2+). Residues 116 to 119 (SHNH) and Arg-138 contribute to the substrate site. His-117 (proton acceptor) is an active-site residue. Asp-139 contributes to the Mg(2+) binding site. Substrate is bound at residue Gln-264. Mg(2+) is bound at residue Asp-292. Position 336-338 (336-338 (ESQ)) interacts with substrate. Residues Asn-524 and Gly-561 each coordinate ATP. A Mg(2+)-binding site is contributed by Asn-562. Ser-564 is a substrate binding site.

This sequence belongs to the FGAMS family. As to quaternary structure, monomer. Part of the FGAM synthase complex composed of 1 PurL, 1 PurQ and 2 PurS subunits.

The protein resides in the cytoplasm. The enzyme catalyses N(2)-formyl-N(1)-(5-phospho-beta-D-ribosyl)glycinamide + L-glutamine + ATP + H2O = 2-formamido-N(1)-(5-O-phospho-beta-D-ribosyl)acetamidine + L-glutamate + ADP + phosphate + H(+). It functions in the pathway purine metabolism; IMP biosynthesis via de novo pathway; 5-amino-1-(5-phospho-D-ribosyl)imidazole from N(2)-formyl-N(1)-(5-phospho-D-ribosyl)glycinamide: step 1/2. Functionally, part of the phosphoribosylformylglycinamidine synthase complex involved in the purines biosynthetic pathway. Catalyzes the ATP-dependent conversion of formylglycinamide ribonucleotide (FGAR) and glutamine to yield formylglycinamidine ribonucleotide (FGAM) and glutamate. The FGAM synthase complex is composed of three subunits. PurQ produces an ammonia molecule by converting glutamine to glutamate. PurL transfers the ammonia molecule to FGAR to form FGAM in an ATP-dependent manner. PurS interacts with PurQ and PurL and is thought to assist in the transfer of the ammonia molecule from PurQ to PurL. The chain is Phosphoribosylformylglycinamidine synthase subunit PurL from Mycobacterium bovis (strain BCG / Pasteur 1173P2).